The following is a 174-amino-acid chain: Large ribosomal subunit protein uL10 (174 aa).

The protein belongs to the universal ribosomal protein uL10 family. Part of the ribosomal stalk of the 50S ribosomal subunit. The N-terminus interacts with L11 and the large rRNA to form the base of the stalk. The C-terminus forms an elongated spine to which L12 dimers bind in a sequential fashion forming a multimeric L10(L12)X complex.

Its function is as follows. Forms part of the ribosomal stalk, playing a central role in the interaction of the ribosome with GTP-bound translation factors. This Anaeromyxobacter dehalogenans (strain 2CP-C) protein is Large ribosomal subunit protein uL10.